The primary structure comprises 383 residues: DNA dC-&gt;dU-editing enzyme APOBEC-3G (383 aa).

Residues Met1–Pro60 are essential for cytoplasmic localization. 2 consecutive CMP/dCMP-type deaminase domains span residues Arg29–Leu138 and Gly214–Leu327. At Thr32 the chain carries Phosphothreonine; by PKA. Positions 65, 97, and 100 each coordinate Zn(2+). The tract at residues Lys209 to Ala335 is necessary for homooligomerization. Positions Ser213–Gln215 are interaction with DNA. Thr218 is subject to Phosphothreonine; by PKA and CAMK2. Position 257 (His257) interacts with Zn(2+). Residue Glu259 is the Proton donor of the active site. Zn(2+) is bound by residues Cys287 and Cys290. The interval Arg312–Arg319 is interaction with DNA.

It belongs to the cytidine and deoxycytidylate deaminase family. As to quaternary structure, homodimer. Homooligomer. Can bind RNA to form ribonucleoprotein complexes of high-molecular-mass (HMM) or low-molecular-mass (LMM). HMM is inactive and heterogeneous in protein composition because of binding nonselectively to cellular RNAs, which in turn are associated with variety of cellular proteins. The LMM form which is enzymatically active has few or no RNAs associated. Its ability to form homooligomer is distinct from its ability to assemble into HMM. Interacts with APOBEC3B, APOBEC3F, MOV10, AGO2, EIF4E, EIF4ENIF1, DCP2 and DDX6 in an RNA-dependent manner. Interacts with AGO1, AGO3 and PKA/PRKACA. Zn(2+) serves as cofactor.

The protein resides in the cytoplasm. It is found in the nucleus. It localises to the P-body. It carries out the reaction a 2'-deoxycytidine in single-stranded DNA + H2O + H(+) = a 2'-deoxyuridine in single-stranded DNA + NH4(+). Its function is as follows. DNA deaminase (cytidine deaminase) which acts as an inhibitor of retrovirus replication and retrotransposon mobility. After the penetration of retroviral nucleocapsids into target cells of infection and the initiation of reverse transcription, it can induce the conversion of cytosine to uracil in the minus-sense single-strand viral DNA, leading to G-to-A hypermutations in the subsequent plus-strand viral DNA. The resultant detrimental levels of mutations in the proviral genome, along with a deamination-independent mechanism that works prior to the proviral integration, together exert efficient antiretroviral effects in infected target cells. Selectively targets single-stranded DNA and does not deaminate double-stranded DNA or single- or double-stranded RNA. This Erythrocebus patas (Red guenon) protein is DNA dC-&gt;dU-editing enzyme APOBEC-3G (APOBEC3G).